We begin with the raw amino-acid sequence, 205 residues long: ATP-dependent Clp protease proteolytic subunit (205 aa).

Ser109 acts as the Nucleophile in catalysis. The active site involves His134.

This sequence belongs to the peptidase S14 family. In terms of assembly, fourteen ClpP subunits assemble into 2 heptameric rings which stack back to back to give a disk-like structure with a central cavity, resembling the structure of eukaryotic proteasomes.

The protein resides in the cytoplasm. The enzyme catalyses Hydrolysis of proteins to small peptides in the presence of ATP and magnesium. alpha-casein is the usual test substrate. In the absence of ATP, only oligopeptides shorter than five residues are hydrolyzed (such as succinyl-Leu-Tyr-|-NHMec, and Leu-Tyr-Leu-|-Tyr-Trp, in which cleavage of the -Tyr-|-Leu- and -Tyr-|-Trp bonds also occurs).. Functionally, cleaves peptides in various proteins in a process that requires ATP hydrolysis. Has a chymotrypsin-like activity. Plays a major role in the degradation of misfolded proteins. The polypeptide is ATP-dependent Clp protease proteolytic subunit (Buchnera aphidicola subsp. Baizongia pistaciae (strain Bp)).